A 370-amino-acid chain; its full sequence is Histidinol-phosphate aminotransferase (370 aa).

An N6-(pyridoxal phosphate)lysine modification is found at K223.

It belongs to the class-II pyridoxal-phosphate-dependent aminotransferase family. Histidinol-phosphate aminotransferase subfamily. Homodimer. It depends on pyridoxal 5'-phosphate as a cofactor.

It catalyses the reaction L-histidinol phosphate + 2-oxoglutarate = 3-(imidazol-4-yl)-2-oxopropyl phosphate + L-glutamate. The protein operates within amino-acid biosynthesis; L-histidine biosynthesis; L-histidine from 5-phospho-alpha-D-ribose 1-diphosphate: step 7/9. The chain is Histidinol-phosphate aminotransferase from Methylobacterium sp. (strain 4-46).